A 560-amino-acid chain; its full sequence is Eukaryotic translation initiation factor 3 subunit D-1 (560 aa).

A disordered region spans residues 98–166; sequence VQKPPHQRGR…RGPPPKMRES (69 aa). Over residues 100-121 the composition is skewed to basic residues; it reads KPPHQRGRFRNMRNSRSGRGRN. Phosphothreonine is present on T128. The span at 147–156 shows a compositional bias: basic residues; it reads GRGMGKKFGH. The interval 291–305 is RNA gate; that stretch reads EFDLLTVNESSVEPP.

It belongs to the eIF-3 subunit D family. As to quaternary structure, component of the eukaryotic translation initiation factor 3 (eIF-3) complex. The eIF-3 complex interacts with pix.

The protein localises to the cytoplasm. Its function is as follows. mRNA cap-binding component of the eukaryotic translation initiation factor 3 (eIF-3) complex, which is involved in protein synthesis of a specialized repertoire of mRNAs and, together with other initiation factors, stimulates binding of mRNA and methionyl-tRNAi to the 40S ribosome. The eIF-3 complex specifically targets and initiates translation of a subset of mRNAs involved in cell proliferation. In the eIF-3 complex, eif3d specifically recognizes and binds the 7-methylguanosine cap of a subset of mRNAs. In Drosophila yakuba (Fruit fly), this protein is Eukaryotic translation initiation factor 3 subunit D-1.